Reading from the N-terminus, the 366-residue chain is Phospho-2-dehydro-3-deoxyheptonate aldolase (366 aa).

The protein belongs to the class-I DAHP synthase family.

The catalysed reaction is D-erythrose 4-phosphate + phosphoenolpyruvate + H2O = 7-phospho-2-dehydro-3-deoxy-D-arabino-heptonate + phosphate. It participates in metabolic intermediate biosynthesis; chorismate biosynthesis; chorismate from D-erythrose 4-phosphate and phosphoenolpyruvate: step 1/7. Its function is as follows. Stereospecific condensation of phosphoenolpyruvate (PEP) and D-erythrose-4-phosphate (E4P) giving rise to 3-deoxy-D-arabino-heptulosonate-7-phosphate (DAHP). The polypeptide is Phospho-2-dehydro-3-deoxyheptonate aldolase (aroG) (Corynebacterium glutamicum (strain ATCC 13032 / DSM 20300 / JCM 1318 / BCRC 11384 / CCUG 27702 / LMG 3730 / NBRC 12168 / NCIMB 10025 / NRRL B-2784 / 534)).